Consider the following 354-residue polypeptide: UPF0283 membrane protein HI_0043 (354 aa).

Helical transmembrane passes span leucine 57–isoleucine 77, isoleucine 87–isoleucine 107, and glutamate 211–tryptophan 231.

It belongs to the UPF0283 family.

The protein resides in the cell inner membrane. The protein is UPF0283 membrane protein HI_0043 of Haemophilus influenzae (strain ATCC 51907 / DSM 11121 / KW20 / Rd).